Reading from the N-terminus, the 311-residue chain is Dehydrogenase/reductase SDR family member 7C (311 aa).

An N-terminal signal peptide occupies residues 1-18 (MGLMAVLMLPLLLLGISG). NAD(+) is bound by residues S47, L49, Y191, K195, and S226. Y191 acts as the Proton acceptor in catalysis.

This sequence belongs to the short-chain dehydrogenases/reductases (SDR) family. Expressed in skeletal muscle and cardiac muscle. Also expressed in liver, kidney, adipocytes and skin.

It localises to the sarcoplasmic reticulum membrane. It carries out the reaction all-trans-retinol + NAD(+) = all-trans-retinal + NADH + H(+). Functionally, NADH-dependent oxidoreductase which catalyzes the oxidation of all-trans-retinol to all-trans-retinal. Plays a role in the regulation of cardiac and skeletal muscle metabolic functions. Maintains Ca(2+) intracellular homeostasis by repressing Ca(2+) release from the sarcoplasmic reticulum (SR) in myotubes, possibly through local alternations in NAD/NADH or retinol/retinal. Also plays a role in Ca(2+) homeostasis by controlling Ca(2+) overload in the cytosol and the SR in myotubes. Involved in glucose uptake into skeletal muscles and muscle performance by activating PI3K and mTORC2-mediated AKT1 phosphorylation signaling pathways, possibly through the action of its downstream catalytic product all-trans-retinoic acid. This Mus musculus (Mouse) protein is Dehydrogenase/reductase SDR family member 7C.